Here is a 396-residue protein sequence, read N- to C-terminus: Acetate kinase (396 aa).

Position 7 (Asn7) interacts with Mg(2+). Position 14 (Lys14) interacts with ATP. A substrate-binding site is contributed by Arg88. Asp145 (proton donor/acceptor) is an active-site residue. ATP contacts are provided by residues 205–209, 279–281, and 327–331; these read HLGNG, DFR, and GIGEN. Glu381 provides a ligand contact to Mg(2+).

It belongs to the acetokinase family. As to quaternary structure, homodimer. It depends on Mg(2+) as a cofactor. Mn(2+) serves as cofactor.

It is found in the cytoplasm. The catalysed reaction is acetate + ATP = acetyl phosphate + ADP. It functions in the pathway metabolic intermediate biosynthesis; acetyl-CoA biosynthesis; acetyl-CoA from acetate: step 1/2. Its function is as follows. Catalyzes the formation of acetyl phosphate from acetate and ATP. Can also catalyze the reverse reaction. This is Acetate kinase from Campylobacter jejuni subsp. jejuni serotype O:23/36 (strain 81-176).